A 172-amino-acid polypeptide reads, in one-letter code: Large ribosomal subunit protein uL10 (172 aa).

Belongs to the universal ribosomal protein uL10 family. As to quaternary structure, part of the ribosomal stalk of the 50S ribosomal subunit. The N-terminus interacts with L11 and the large rRNA to form the base of the stalk. The C-terminus forms an elongated spine to which L12 dimers bind in a sequential fashion forming a multimeric L10(L12)X complex.

Functionally, forms part of the ribosomal stalk, playing a central role in the interaction of the ribosome with GTP-bound translation factors. This is Large ribosomal subunit protein uL10 (rplJ) from Chlamydia trachomatis serovar D (strain ATCC VR-885 / DSM 19411 / UW-3/Cx).